The primary structure comprises 303 residues: Quinolinate synthase (303 aa).

2 residues coordinate iminosuccinate: His-23 and Ser-40. Cys-85 is a [4Fe-4S] cluster binding site. Iminosuccinate-binding positions include 111–113 and Ser-128; that span reads YIN. Cys-171 provides a ligand contact to [4Fe-4S] cluster. Iminosuccinate is bound by residues 197–199 and Thr-214; that span reads HPE. Cys-259 is a [4Fe-4S] cluster binding site.

This sequence belongs to the quinolinate synthase family. Type 2 subfamily. [4Fe-4S] cluster is required as a cofactor.

The protein localises to the cytoplasm. The enzyme catalyses iminosuccinate + dihydroxyacetone phosphate = quinolinate + phosphate + 2 H2O + H(+). It participates in cofactor biosynthesis; NAD(+) biosynthesis; quinolinate from iminoaspartate: step 1/1. Catalyzes the condensation of iminoaspartate with dihydroxyacetone phosphate to form quinolinate. The protein is Quinolinate synthase of Clostridium acetobutylicum (strain ATCC 824 / DSM 792 / JCM 1419 / IAM 19013 / LMG 5710 / NBRC 13948 / NRRL B-527 / VKM B-1787 / 2291 / W).